Reading from the N-terminus, the 671-residue chain is Zinc finger protein 568 (671 aa).

A disordered region spans residues 1-31 (MERLSQMAGRRAWCAEDSVPRQEEEDRTRPS). Residues 18–29 (SVPRQEEEDRTR) are compositionally biased toward basic and acidic residues. 2 consecutive KRAB domains span residues 34–105 (VTFK…RRSP) and 124–195 (LRFE…IWHP). Residues 214–366 (EKMAKKHTCP…QGSERPHKCK (153 aa)) form a disordered region. Basic and acidic residues-rich tracts occupy residues 226–251 (EDSKTRGDREVTRELEGQQVHQEGHL), 296–312 (IEREQLHSKAKASEHAQ), and 329–341 (RPQESRKDSERKK). 11 C2H2-type zinc fingers span residues 363–385 (HKCKECGKAFHTPSQLSHHQKLH), 391–413 (YKCQECGKAFPSNAQLSLHHRVH), 419–441 (FECKECGKAFMRPSHLLRHQRIH), 447–469 (HKCKECGKAFRYDTQLSLHLLTH), 475–497 (FECKDCDKVYSCASQLALHQMSH), 503–525 (HKCKECGKGFISDSHLLRHQSVH), 531–553 (YKCKECGKGFRRGSELARHQRAH), 559–581 (YKCKECGKSFTCTTELFRHQKVH), 587–609 (HKCKECGKAFIRRSELTHHERSH), 615–637 (YECKECGKTFGRGSELSRHQKIH), and 643–665 (YKCQQCGKAFIRGSHLTQHQRIH).

This sequence belongs to the krueppel C2H2-type zinc-finger protein family. In terms of assembly, interacts with TRIM28. In terms of tissue distribution, little or no expression detected in most adult tissues (brain, liver, kidney, spleen, testis, ovary). In the hippocampus, detected in neural stem cells within the subventricular zone and subgranular zone.

It is found in the nucleus. Its function is as follows. Has transcriptional repression activity, partially through the recruitment of the corepressor TRIM28 but also has repression activity independently of this interaction. Essential during embryonic development, where it acts as direct repressor of IGF2-P0, placental-specific transcript of IGF2, in early development and regulates convergent extension movements required for axis elongation and tissue morphogenesis in all germ layers. Also important for normal morphogenesis of extraembryonic tissues including the yolk sac, extraembryonic mesoderm and placenta. May enhance proliferation or maintenance of neural stem cells. The sequence is that of Zinc finger protein 568 from Mus musculus (Mouse).